The following is a 198-amino-acid chain: LIM domain-containing protein D (198 aa).

Residues 5 to 65 (GKCTRCQKTV…ANHYPVGGLS (61 aa)) enclose the LIM zinc-binding domain.

It localises to the cell projection. The protein localises to the pseudopodium. Its subcellular location is the cytoplasm. The protein resides in the cell cortex. It is found in the cytoskeleton. In terms of biological role, binds to F-actin and may modulate the chemotactic response during early development and contribute to the maintenance of the strength of the actin cytoskeleton. This chain is LIM domain-containing protein D (limD), found in Dictyostelium discoideum (Social amoeba).